Here is a 212-residue protein sequence, read N- to C-terminus: uncharacterized protein (212 aa).

Residues 186–206 traverse the membrane as a helical segment; that stretch reads VITLISFMLFSILFFLIFLIV.

Its subcellular location is the membrane. This is an uncharacterized protein from Mycoplasma genitalium (strain ATCC 33530 / DSM 19775 / NCTC 10195 / G37) (Mycoplasmoides genitalium).